The primary structure comprises 517 residues: Crotonobetaine/carnitine--CoA ligase (517 aa).

Belongs to the ATP-dependent AMP-binding enzyme family.

The catalysed reaction is 4-(trimethylamino)butanoate + ATP + CoA = 4-(trimethylamino)butanoyl-CoA + AMP + diphosphate. The enzyme catalyses crotonobetaine + ATP + CoA = crotonobetainyl-CoA + AMP + diphosphate. It carries out the reaction (R)-carnitine + ATP + CoA = (R)-carnitinyl-CoA + AMP + diphosphate. The protein operates within amine and polyamine metabolism; carnitine metabolism. Functionally, catalyzes the transfer of CoA to carnitine, generating the initial carnitinyl-CoA needed for the CaiB reaction cycle. Also has activity toward crotonobetaine and gamma-butyrobetaine. The polypeptide is Crotonobetaine/carnitine--CoA ligase (Salmonella arizonae (strain ATCC BAA-731 / CDC346-86 / RSK2980)).